The following is a 461-amino-acid chain: Early growth response factor homolog 1 (461 aa).

3 disordered regions span residues 1–25, 96–152, and 232–308; these read MALH…PSLN, TLMP…ELTL, and DVLH…YSSL. 4 stretches are compositionally biased toward polar residues: residues 96-105, 129-144, 249-265, and 272-291; these read TLMPAPSSSY, GSNS…GNSK, LGSS…SRPS, and QRTN…SMSP. Residues 299–308 show a composition bias toward low complexity; the sequence is YSNSASYSSL. 3 C2H2-type zinc fingers span residues 374-398, 404-426, and 432-454; these read YKCP…IRIH, FQCR…VRTH, and FSCD…TKVH.

It belongs to the EGR C2H2-type zinc-finger protein family. As to expression, expressed in sheath cells and distal tip cells of the somatic gonad, as well as in the intestine and sperm (at protein level). Expression not observed in oocytes (at protein level).

It localises to the nucleus. It is found in the cytoplasm. The protein resides in the perinuclear region. Its function is as follows. Sequence-specific DNA-binding transcription factor. Plays a role in oocyte development, acting cell-autonomously in the somatic gonad. Involved in negative regulation of oocyte MAPK activation and inhibits oocyte maturation and ovulation. The sequence is that of Early growth response factor homolog 1 from Caenorhabditis elegans.